The chain runs to 688 residues: Probable transcription factor gsfR1 (688 aa).

Acidic residues predominate over residues 1-16 (MSDGPETAEGDTDDAV). Residues 1–95 (MSDGPETAEG…TPVSSRGSIA (95 aa)) form a disordered region. The span at 24–36 (RVASESSARSQPR) shows a compositional bias: polar residues. The segment covering 58-75 (EHSKEKNVSRRLPTEKTP) has biased composition (basic and acidic residues).

The protein localises to the nucleus. Probable transcription factor that regulates expression of the gene cluster that mediates the biosynthesis of Griseofulvin, an important antifungal drug that has been in use for a long time for treating dermatophyte infections. This Penicillium aethiopicum protein is Probable transcription factor gsfR1.